Here is a 311-residue protein sequence, read N- to C-terminus: MFQHKTVLLRETVDGLNIKPDGTYVDCTLGGAGHSTYLLQQLSEKGRLIAFDQDDTALQHAKEVLSDYKGQLILIKSNFRYLKEYLNEQGVTEVDGILFDLGVSSPQLDTPERGFSYHHDAPLDMRMDQSATLSAKEVVNEWRYEDLVRIFFKYGEEKFSKQIARKIEEARMKSPIQTTGQLVDLIKDAIPAPARRSGGHPAKRVFQAIRIAVNDELRVFEEALEQAIEVLKPGGRVSVITFHSLEDRICKTTFKEKSSLPELPPGLPVIPEEFEPELKLITRKPITASQEELEENNRARSAKLRIAEKRK.

S-adenosyl-L-methionine-binding positions include 32–34 (AGH), D52, F79, D100, and Q107. The tract at residues 287-311 (TASQEELEENNRARSAKLRIAEKRK) is disordered. The span at 300–311 (RSAKLRIAEKRK) shows a compositional bias: basic residues.

The protein belongs to the methyltransferase superfamily. RsmH family.

Its subcellular location is the cytoplasm. It catalyses the reaction cytidine(1402) in 16S rRNA + S-adenosyl-L-methionine = N(4)-methylcytidine(1402) in 16S rRNA + S-adenosyl-L-homocysteine + H(+). Specifically methylates the N4 position of cytidine in position 1402 (C1402) of 16S rRNA. The protein is Ribosomal RNA small subunit methyltransferase H of Bacillus subtilis (strain 168).